Reading from the N-terminus, the 323-residue chain is MDHAITPEPHLVPGYTGHCAQNRDRVGRTYGRQTHKLLIDPCIYHAPELIVAPIHAKRGLKDYPTEQELKILRTREGLVDSVYRHPILPGYAGFVPNKVSQIGKRYVAAASAGVARHETLMELYRCENRTLRHRDLLESGNGLFDRKINERLLPQTYYRSPLILVTGVSKGIKDETCPPKTEKLCYSKFTSPHFLEDEDADKFIINGYSGHIPMSVTRFGESNKVLTNRALCSFSDYMYKRKRDTWCCGQDLSRPSITCPPVGHFVVYHEDSGMVPNYAGHVPGETYKFGRTYAKTTYDAKRWLEVHKNLTVLPEVANLDYAY.

It belongs to the CIMIP2 family.

It is found in the cytoplasm. The protein resides in the cytoskeleton. Its subcellular location is the cilium axoneme. Probable microtubule inner protein (MIP) part of the dynein-decorated doublet microtubules (DMTs) in cilium axoneme. This is CIMIP2 protein CG18335 from Drosophila melanogaster (Fruit fly).